A 662-amino-acid chain; its full sequence is UvrABC system protein B (662 aa).

Positions 31–188 (DNIEGGEKAQ…NDLVDIQFER (158 aa)) constitute a Helicase ATP-binding domain. 44–51 (GATGTGKT) is a binding site for ATP. The Beta-hairpin signature appears at 97–120 (YYDYYQPEAYVPSSDTYIEKDSSV). Residues 435-601 (QIDDLLGEIN…TIKKEIRDLI (167 aa)) enclose the Helicase C-terminal domain. A UVR domain is found at 626–661 (KELVKKLEKQMQEAVEVLDFELAAQIRDMMLEVKAL).

It belongs to the UvrB family. In terms of assembly, forms a heterotetramer with UvrA during the search for lesions. Interacts with UvrC in an incision complex.

It is found in the cytoplasm. Functionally, the UvrABC repair system catalyzes the recognition and processing of DNA lesions. A damage recognition complex composed of 2 UvrA and 2 UvrB subunits scans DNA for abnormalities. Upon binding of the UvrA(2)B(2) complex to a putative damaged site, the DNA wraps around one UvrB monomer. DNA wrap is dependent on ATP binding by UvrB and probably causes local melting of the DNA helix, facilitating insertion of UvrB beta-hairpin between the DNA strands. Then UvrB probes one DNA strand for the presence of a lesion. If a lesion is found the UvrA subunits dissociate and the UvrB-DNA preincision complex is formed. This complex is subsequently bound by UvrC and the second UvrB is released. If no lesion is found, the DNA wraps around the other UvrB subunit that will check the other stand for damage. This is UvrABC system protein B from Streptococcus pneumoniae (strain Hungary19A-6).